A 109-amino-acid polypeptide reads, in one-letter code: Movement protein TGB2 (109 aa).

At 1-9 (MPLQPPPDH) the chain is on the cytoplasmic side. A helical membrane pass occupies residues 10-30 (TWAVRIIALGLAVTALIFTST). The Lumenal portion of the chain corresponds to 31 to 71 (RDTSRHVGDPSHSLPFGGHYRDGSKVIHYNSPRSSKPSNHT). A helical transmembrane segment spans residues 72-92 (PYLLFAPIGIILLIHALHRLG). Topologically, residues 93 to 109 (NSAHICRCTHCMPHSQT) are cytoplasmic.

This sequence belongs to the Tymovirales TGBp2 protein family.

The protein localises to the host endoplasmic reticulum membrane. In terms of biological role, plays a role in viral cell-to-cell propagation, by facilitating genome transport to neighboring plant cells through plasmosdesmata,. In Citrus (ICRSV), this protein is Movement protein TGB2.